The following is an 856-amino-acid chain: Lon protease homolog 2, peroxisomal (856 aa).

In terms of domain architecture, Lon N-terminal spans 13–222 (LPLLLTHEGV…VTIPLLLRQI (210 aa)). 379–386 (GPPGVGKT) is an ATP binding site. The segment covering 586 to 608 (GQHREHKSEHLEAPEGEERKESV) has biased composition (basic and acidic residues). The segment at 586–614 (GQHREHKSEHLEAPEGEERKESVPEGSKS) is disordered. The Lon proteolytic domain maps to 655–841 (LNQPGVAIGL…DEVLNAAFDG (187 aa)). Active-site residues include Ser747 and Lys790. The short motif at 854-856 (SKL) is the Microbody targeting signal element.

This sequence belongs to the peptidase S16 family.

It localises to the peroxisome matrix. It catalyses the reaction Hydrolysis of proteins in presence of ATP.. Its function is as follows. ATP-dependent serine protease that mediates the selective degradation of misfolded and unassembled polypeptides in the peroxisomal matrix. Necessary for type 2 peroxisome targeting signal (PTS2)-containing protein processing and facilitates peroxisome matrix protein import. The polypeptide is Lon protease homolog 2, peroxisomal (lonp2) (Xenopus laevis (African clawed frog)).